Consider the following 1231-residue polypeptide: uncharacterized protein (1231 aa).

3 disordered regions span residues 171–197, 210–259, and 389–547; these read LKPDESIKSSMKKNVDGTGDSNKQHDD, DESF…HLPT, and ASPR…RSSR. Residues 440 to 450 are compositionally biased toward basic residues; it reads RSRHSHKRRSI. Residues S449, S451, S453, and S455 each carry the phosphoserine modification. Basic residues predominate over residues 458 to 502; sequence RGGRRAVRRSRSRSPRRSYNRGSTRSRSRSMRHRSRSPAHYRGRG. Over residues 503–541 the composition is skewed to basic and acidic residues; the sequence is RGREPASKERGSSSRDFGGRHSLQRERERSSEYYHRNEG. Y549 carries the phosphotyrosine modification. 3 disordered regions span residues 570-591, 950-981, and 1058-1203; these read KTSSISPTASSNKEKEKEASEP, PNLDRDMSSMPINKQRRGRNTPSIMLDDDDEE, and TLSK…PPFN. Residues S573 and S589 each carry the phosphoserine modification. The residue at position 970 (T970) is a Phosphothreonine. S972 carries the phosphoserine modification. Residues 1076-1103 are compositionally biased toward polar residues; sequence YMMNQQHGAPNAQNAPNLGQNPGQNLGQ. Positions 1118–1127 are enriched in low complexity; sequence QQQQQQQQQQ. Over residues 1178 to 1203 the composition is skewed to pro residues; the sequence is PPGPGGYVGPPPNPWASNVPPQPPFN.

This is an uncharacterized protein from Drosophila melanogaster (Fruit fly).